Consider the following 146-residue polypeptide: Transcriptional regulator AdcR (146 aa).

The HTH marR-type domain occupies 1 to 143 (MRQLAKDINA…IQRFLTALVG (143 aa)). Residues E24, C30, E41, and H42 each coordinate Zn(2+). The segment at residues 54–77 (NSELARRLNVSQAAVTKAIKSLVK) is a DNA-binding region (H-T-H motif). Residues E107, H108, and H112 each coordinate Zn(2+).

In terms of assembly, homodimer.

With respect to regulation, zinc acts as a coregulator and is required for DNA-binding activity. Its function is as follows. Zinc-responsive regulator that acts both as a repressor and as an activator by regulating directly the promoters of its target genes. In the presence of zinc, directly represses the expression of the adcRCBA operon, of genes coding for a group of surface antigen zinc-binding pneumococcal histidine triad proteins (PhtA, PhtB, PhtD and PhtE), and of adcAII. Can also activate expression of adh. The protein is Transcriptional regulator AdcR (adcR) of Streptococcus pneumoniae serotype 2 (strain D39 / NCTC 7466).